Reading from the N-terminus, the 79-residue chain is MAQQRRGGRKRRKVDYIAANHIEYIDYKDTELLKRFISERGKILPRRVTGTGAKNQRKLTIAIKRARIMGLLPFVSDEQ.

This sequence belongs to the bacterial ribosomal protein bS18 family. As to quaternary structure, part of the 30S ribosomal subunit. Forms a tight heterodimer with protein bS6.

Functionally, binds as a heterodimer with protein bS6 to the central domain of the 16S rRNA, where it helps stabilize the platform of the 30S subunit. This Enterococcus faecalis (strain ATCC 700802 / V583) protein is Small ribosomal subunit protein bS18.